Consider the following 838-residue polypeptide: Outer membrane usher protein YraJ (838 aa).

Residues 1 to 40 (MPQRHHQGHKRTPKQLALIIKRCLPMVLTGSGMLCTTANA) form the signal peptide. Cysteines 815 and 837 form a disulfide.

This sequence belongs to the fimbrial export usher family.

It localises to the cell outer membrane. Functionally, part of the yraHIJK fimbrial operon. Could contribute to adhesion to various surfaces in specific environmental niches. Increases adhesion to eukaryotic T24 bladder epithelial cells in the absence of fim operon. Probably involved in the export and assembly of fimbrial subunits across the outer membrane. The chain is Outer membrane usher protein YraJ (yraJ) from Escherichia coli (strain K12).